The following is a 681-amino-acid chain: U3 small nucleolar ribonucleoprotein protein MPP10 (681 aa).

Ser-61, Ser-120, and Ser-139 each carry phosphoserine. The segment covering 105–147 (SLLPESEEQEREEDGSEIEADDKEDLEDLEEEEVSDMGNDDPE) has biased composition (acidic residues). 2 disordered regions span residues 105–202 (SLLP…IVDD) and 216–364 (NIEK…EKRQ). Residues 109-138 (ESEEQEREEDGSEIEADDKEDLEDLEEEEV) are a coiled coil. The span at 148–162 (MGERAENSSKSDLRK) shows a compositional bias: basic and acidic residues. Phosphoserine occurs at positions 163, 167, and 171. Residues 180-190 (LEQQSKVQNKG) show a composition bias toward polar residues. 2 stretches are compositionally biased toward basic and acidic residues: residues 193–202 (KPREKSIVDD) and 216–226 (NIEKEEERKDD). Residues 205–239 (FKLSEMEAYLENIEKEEERKDDNDEEEEDIDFFED) adopt a coiled-coil conformation. Positions 227-247 (NDEEEEDIDFFEDIDSDEDEG) are enriched in acidic residues. Ser-242 is subject to Phosphoserine. A compositionally biased stretch (basic residues) spans 253-264 (KKLKSGKSSRNL). A phosphoserine mark is found at Ser-275 and Ser-289. The segment covering 280 to 290 (TNVHDDELDSN) has biased composition (basic and acidic residues). Coiled coils occupy residues 284–324 (DDEL…NKQH) and 348–382 (NVKK…LEKK). Residues 291-318 (KEDDEIAEEEAEELSISETDEDDDLQEN) are compositionally biased toward acidic residues. Residues 319 to 329 (EDNKQHKESLK) show a composition bias toward basic and acidic residues. A Glycyl lysine isopeptide (Lys-Gly) (interchain with G-Cter in SUMO2) cross-link involves residue Lys-350. Positions 351–364 (KNSDEVKSSFEKRQ) are enriched in basic and acidic residues. Residues Lys-382 and Lys-394 each participate in a glycyl lysine isopeptide (Lys-Gly) (interchain with G-Cter in SUMO2) cross-link. Positions 469-490 (LAEIYEQEYIKLNQQKTAEEEN) form a coiled coil. A Glycyl lysine isopeptide (Lys-Gly) (interchain with G-Cter in SUMO2) cross-link involves residue Lys-555. The span at 558–575 (NKAGDIKTAAEKTATDKK) shows a compositional bias: basic and acidic residues. The disordered stretch occupies residues 558 to 606 (NKAGDIKTAAEKTATDKKRERRKKKYQKRMKIKEKEKRRKLLEKSSVDQ). A coiled-coil region spans residues 574-604 (KKRERRKKKYQKRMKIKEKEKRRKLLEKSSV). A compositionally biased stretch (basic residues) spans 576-598 (RERRKKKYQKRMKIKEKEKRRKL). The residue at position 609 (Lys-609) is an N6-acetyllysine. Residues Lys-632 and Lys-649 each participate in a glycyl lysine isopeptide (Lys-Gly) (interchain with G-Cter in SUMO2) cross-link. Residues 648 to 670 (SKLQDQVKMQINDAKKTEKKKKK) are a coiled coil. A disordered region spans residues 660 to 681 (DAKKTEKKKKKRQDISVHKLKL). A compositionally biased stretch (basic and acidic residues) spans 672–681 (QDISVHKLKL).

The protein belongs to the MPP10 family. In terms of assembly, part of the small subunit (SSU) processome, composed of more than 70 proteins and the RNA chaperone small nucleolar RNA (snoRNA) U3. Component of a heterotrimeric complex containing IMP3, IMP4 and MPHOSPH10. Interacts with IMP3 and IMP4. Post-translationally, phosphorylated in M (mitotic) phase.

The protein resides in the nucleus. It localises to the nucleolus. Its subcellular location is the chromosome. In terms of biological role, component of the 60-80S U3 small nucleolar ribonucleoprotein (U3 snoRNP). Required for the early cleavages during pre-18S ribosomal RNA processing. Part of the small subunit (SSU) processome, first precursor of the small eukaryotic ribosomal subunit. During the assembly of the SSU processome in the nucleolus, many ribosome biogenesis factors, an RNA chaperone and ribosomal proteins associate with the nascent pre-rRNA and work in concert to generate RNA folding, modifications, rearrangements and cleavage as well as targeted degradation of pre-ribosomal RNA by the RNA exosome. This Homo sapiens (Human) protein is U3 small nucleolar ribonucleoprotein protein MPP10.